A 441-amino-acid chain; its full sequence is 3-phosphoshikimate 1-carboxyvinyltransferase (441 aa).

Lys-25, Ser-26, and Arg-30 together coordinate 3-phosphoshikimate. Lys-25 lines the phosphoenolpyruvate pocket. Residues Gly-97 and Arg-125 each coordinate phosphoenolpyruvate. Ser-169, Gln-170, Asp-311, and Lys-338 together coordinate 3-phosphoshikimate. Phosphoenolpyruvate is bound at residue Gln-170. Catalysis depends on Asp-311, which acts as the Proton acceptor. Positions 342, 383, and 410 each coordinate phosphoenolpyruvate.

It belongs to the EPSP synthase family. In terms of assembly, monomer.

Its subcellular location is the cytoplasm. The catalysed reaction is 3-phosphoshikimate + phosphoenolpyruvate = 5-O-(1-carboxyvinyl)-3-phosphoshikimate + phosphate. Its pathway is metabolic intermediate biosynthesis; chorismate biosynthesis; chorismate from D-erythrose 4-phosphate and phosphoenolpyruvate: step 6/7. Catalyzes the transfer of the enolpyruvyl moiety of phosphoenolpyruvate (PEP) to the 5-hydroxyl of shikimate-3-phosphate (S3P) to produce enolpyruvyl shikimate-3-phosphate and inorganic phosphate. In Chlamydia muridarum (strain MoPn / Nigg), this protein is 3-phosphoshikimate 1-carboxyvinyltransferase.